The sequence spans 710 residues: Interferon-induced GTP-binding protein Mx2 (710 aa).

The disordered stretch occupies residues 1–51; that stretch reads MSMSFRPLKYKRHTQTSTQHHPKQDIYFHQQPPGPPLGQTMSPPQWQVEES. The span at 39–50 shows a compositional bias: polar residues; sequence QTMSPPQWQVEE. The Dynamin-type G domain occupies 112 to 383; that stretch reads DLALPAIAVI…LIWHINKSLP (272 aa). Positions 122–129 are G1 motif; sequence GDQSSGKS. Position 122–129 (122–129) interacts with GTP; that stretch reads GDQSSGKS. The G2 motif stretch occupies residues 147 to 149; the sequence is ITR. Residues 221–224 are G3 motif; sequence DLPG. GTP is bound by residues 221 to 225 and 290 to 293; these read DLPGI and TKPD. The segment at 290–293 is G4 motif; that stretch reads TKPD. The tract at residues 322–325 is G5 motif; that stretch reads KCRG. The 92-residue stretch at 619 to 710 folds into the GED domain; the sequence is IVEIGVHLNA…ALYEFPHFKG (92 aa).

It belongs to the TRAFAC class dynamin-like GTPase superfamily. Dynamin/Fzo/YdjA family.

Its subcellular location is the cytoplasm. It localises to the nucleus. Interferon-induced dynamin-like GTPase with antiviral activity against vesicular stomatitis virus (VSV). The protein is Interferon-induced GTP-binding protein Mx2 (MX2) of Bos taurus (Bovine).